Reading from the N-terminus, the 91-residue chain is MNVKAIANQXSVAPRKTRLVADLIRGKHVREAQAILMFTPKAASPIVSKLLKSAVANAVHNFSLKEEELYVKEIFVNEGLRLTRLLPRAKG.

It belongs to the universal ribosomal protein uL22 family. As to quaternary structure, part of the 50S ribosomal subunit.

Its function is as follows. This protein binds specifically to 23S rRNA; its binding is stimulated by other ribosomal proteins, e.g. L4, L17, and L20. It is important during the early stages of 50S assembly. It makes multiple contacts with different domains of the 23S rRNA in the assembled 50S subunit and ribosome. The globular domain of the protein is located near the polypeptide exit tunnel on the outside of the subunit, while an extended beta-hairpin is found that lines the wall of the exit tunnel in the center of the 70S ribosome. The protein is Large ribosomal subunit protein uL22 (rplV) of Clover yellow edge phytoplasma.